The primary structure comprises 469 residues: Squamosa promoter-binding-like protein 3 (469 aa).

The segment at 96–118 is disordered; that stretch reads SAEEHDKNMDKGKSKVDDTGTSR. The segment covering 97-115 has biased composition (basic and acidic residues); it reads AEEHDKNMDKGKSKVDDTG. Residues 179-256 form an SBP-type zinc finger; it reads NPHCQVEGCN…HDHNARRRKP (78 aa). Residues Cys-182, Cys-187, Cys-204, His-207, Cys-223, Cys-226, His-230, and Cys-242 each coordinate Zn(2+). The Bipartite nuclear localization signal motif lies at 239–255; sequence KRSCRRRLHDHNARRRK. Positions 446-469 are disordered; it reads NDDDEDHLQLPKPSYDNSHYDQMN. Positions 460-469 are enriched in polar residues; it reads YDNSHYDQMN.

Ubiquitous.

Its subcellular location is the nucleus. Trans-acting factor that binds specifically to the consensus nucleotide sequence 5'-TNCGTACAA-3'. May be involved in panicle development. The protein is Squamosa promoter-binding-like protein 3 (SPL3) of Oryza sativa subsp. indica (Rice).